A 396-amino-acid chain; its full sequence is MTVRLILAKGREKSLLRRHPWVFSGAVARLEGKAQPGETIDVCDSQGKWLARAAWSPSSQIRARVWSWQQDESIDIDFFVRRLNAAQQLRDWLALRDNLDSYRLIAGESDGLPGITIDRFGNFLVLQLLSAGAEYQRAALITALQRCYPDCAIYDRSDVSVRKKEGLELTQGVVLGDAPPPLLPITEHGMKLLVDIQTGHKTGYYLDQRDSRQATRRYAQGRRVLNCFSYTGGFAVSALMGNCKEVISVDTSQAALDVARQNVELNGLDVSKAHFQRDDVFKLLRRYRDEGEKFDLIIMDPPKFVENKNQLMGACRGYKDINMLAMQLLNPGGMLMTFSCSGLMATDLFQKILADAAVDAQREVQFIEQFRQAADHPVISSYPEGMYLKGFACRVI.

The PUA domain occupies Thr2–Arg81.

It belongs to the methyltransferase superfamily. RlmI family.

Its subcellular location is the cytoplasm. It catalyses the reaction cytidine(1962) in 23S rRNA + S-adenosyl-L-methionine = 5-methylcytidine(1962) in 23S rRNA + S-adenosyl-L-homocysteine + H(+). Functionally, specifically methylates the cytosine at position 1962 (m5C1962) of 23S rRNA. This Erwinia tasmaniensis (strain DSM 17950 / CFBP 7177 / CIP 109463 / NCPPB 4357 / Et1/99) protein is Ribosomal RNA large subunit methyltransferase I.